Here is a 435-residue protein sequence, read N- to C-terminus: Ras association domain-containing protein 9 (435 aa).

The interval 1–22 (MAPFGRNLLKTRHKNRSPTKDM) is disordered. A Ras-associating domain is found at 25–119 (EEKEIVVWVC…MQFVLVKTDA (95 aa)). Positions 195-291 (HTIHQQVQRM…KLSAEIEREV (97 aa)) form a coiled coil. The tract at residues 371–423 (SKDGCQGKENRGKEAEASSSNGEIPPLTQRVFNTYTNDTDSDTGISSNHSQDS) is disordered. Residues 375–386 (CQGKENRGKEAE) show a composition bias toward basic and acidic residues. Positions 400 to 423 (RVFNTYTNDTDSDTGISSNHSQDS) are enriched in polar residues.

In terms of assembly, interacts with PAM. In terms of tissue distribution, testis, kidney, skeletal muscle, liver, lung, brain, heart, pituitary gland, adrenal gland and ovary.

The protein resides in the endosome. In terms of biological role, may play a role in regulating vesicuar trafficking in cells. This Rattus norvegicus (Rat) protein is Ras association domain-containing protein 9 (Rassf9).